The following is a 31-amino-acid chain: Glucagon-3 (31 aa).

Belongs to the glucagon family.

The protein resides in the secreted. In terms of biological role, glucagon plays a key role in glucose metabolism and homeostasis. Regulates blood glucose by increasing gluconeogenesis and decreasing glycolysis. This chain is Glucagon-3, found in Huso dauricus (Kaluga sturgeon).